A 221-amino-acid polypeptide reads, in one-letter code: LHFPL tetraspan subfamily member 5 protein (221 aa).

The Cytoplasmic portion of the chain corresponds to 1 to 24 (MPKLLPAQEAARIYHTNYVRNARA). The helical transmembrane segment at 25 to 45 (MGVLWALFTLCFSILMVVTFI) threads the bilayer. At 46-98 (QPYWIGDSIDTPQAGYFGLFSYCIGNALTGELICKGSPLDFGTIPSSAFKTAM) the chain is on the extracellular side. Residues 99 to 119 (FFVGISTFLIIGSILCFSLFF) traverse the membrane as a helical segment. Over 120–128 (FCNAATVYK) the chain is Cytoplasmic. A helical transmembrane segment spans residues 129–149 (VCAWMQLAAATGLMIGCLIYP). Residues 150–179 (DGWDSSEVKRMCGDKTDKYTLGACTVRWAY) lie on the Extracellular side of the membrane. Residues 180–200 (ILCIIGILDALILSFLAFVLG) traverse the membrane as a helical segment. At 201-221 (NRQDNLLPSDFKVESKEEGNE) the chain is on the cytoplasmic side.

Belongs to the LHFP family.

The protein resides in the cell membrane. Probable component of the mechanotransducer (MET) non-specific cation channel complex. The polypeptide is LHFPL tetraspan subfamily member 5 protein (Gallus gallus (Chicken)).